Consider the following 237-residue polypeptide: Chaplin-B (237 aa).

The N-terminal stretch at 1-26 (MRRVTRNGVLAVAASGALAVTMPAYA) is a signal peptide. Residues 42–82 (SPGLISGNTVQLPVDVPVDVCGNTVNVVGLLNPAAGNGCAD) form the Chaplin 1 domain. Disordered stretches follow at residues 81-127 (ADSG…LSGN) and 148-216 (GIGN…TLAG). The segment covering 101–115 (GSATEATSGGAAAEG) has biased composition (low complexity). The Chaplin 2 domain maps to 120-160 (SPGVLSGNGVQLPVHLPVNVSGNSVNVVGIGNPAVGNESTN). Residues 169 to 178 (VRPPAEPEPS) show a composition bias toward pro residues. Positions 202–206 (LAHTG) match the LPXTG sorting signal motif. Threonine 205 carries the pentaglycyl murein peptidoglycan amidated threonine modification. Residues 206–237 (GTDRTLPTLAGGAALVLGGTVLYRRFRPGSGD) constitute a propeptide, removed by sortase.

Belongs to the chaplin family. Long chaplin subfamily.

The protein resides in the secreted. The protein localises to the cell wall. Its function is as follows. One of 8 partially redundant surface-active proteins required for efficient formation of aerial mycelium; the short chaplins assemble into a hydrophobic, amyloidal fibrillar surface layer that envelopes and protects aerial hyphae and spores, presumably anchored to the long chaplins. Chaplins have an overlapping function with the surface-active SapB peptide; chaplins are essential on minimal medium while on rich medium both chaplins and SapB are required for efficient aerial hyphae formation. The long chaplins (ChpA, ChpB, ChpC) are not absolutely necessary for short chaplin localization or rodlet formation, but probably play a role in initiating aerial hyphae development. Chaplins are also involved in cell attachment to a hydrophobic surface. The chain is Chaplin-B from Streptomyces coelicolor (strain ATCC BAA-471 / A3(2) / M145).